A 976-amino-acid polypeptide reads, in one-letter code: Ubiquitin ligase-binding protein BUL1 (976 aa).

The segment at 1–65 (MAKDLNDSGF…SPSLHSPKSW (65 aa)) is disordered. Positions 23 to 39 (SDFTANSSTTMNVNANT) are enriched in polar residues. A compositionally biased stretch (low complexity) spans 53–64 (SSRSPSLHSPKS). Residues Ser58 and Ser70 each carry the phosphoserine modification. Disordered stretches follow at residues 82-124 (LAHS…DGDI), 145-196 (PQGN…SSST), and 857-878 (SEDS…ASLT). Residues 156–160 (FPPSY) carry the PY-motif motif. The segment covering 163-176 (ANNSTATGAAGSSA) has biased composition (low complexity). A compositionally biased stretch (polar residues) spans 177–196 (DLSHQSLSTDALGATRSSST). The span at 862 to 878 (SHTGNGSSSSPSSASLT) shows a compositional bias: low complexity.

It belongs to the BUL1 family. As to quaternary structure, component of the RSP5-BUL1/2 ubiquitin ligase complex composed of at least RSP5 and BUL1 or BUL2.

It localises to the cytoplasm. Its pathway is protein modification; protein ubiquitination. In terms of biological role, component of a RSP5 ubiquitin ligase complex which specifies polyubiquitination and intracellular trafficking of the general amino acid permease GAP1 as well as other permeases such as PMA1. The RSP5-BUL1/2 complex is also necessary for the heat-shock element (HSE)-mediated gene expression, nitrogen starvation GLN3-dependent transcription and pressure-induced differential regulation of the 2 tryptophan permeases TAT1 and TAT2. This is Ubiquitin ligase-binding protein BUL1 (BUL1) from Saccharomyces cerevisiae (strain ATCC 204508 / S288c) (Baker's yeast).